A 906-amino-acid polypeptide reads, in one-letter code: Patched domain-containing protein 3 (906 aa).

Positions 1–70 (MISSKVAPGE…LGQEAPPPRR (70 aa)) are disordered. 2 N-linked (GlcNAc...) asparagine glycosylation sites follow: Asn148 and Asn235. Transmembrane regions (helical) follow at residues 338-358 (TVIP…VVSC), 370-390 (VAVF…GLML), 392-412 (LGVP…GVGV), 442-462 (VAVS…TGIT), 476-496 (GTTL…VMAL), 559-579 (FIVV…CFQV), 760-780 (VMIA…HPVC), 782-802 (LWVT…MAFW), 814-834 (LVIC…AFVS), 848-868 (LYLL…GVCV), and 883-903 (IMFL…PVFL). Positions 339 to 496 (VIPLFHLAYI…ITCFGAVMAL (158 aa)) constitute an SSD domain.

Belongs to the patched family. In terms of tissue distribution, expressed in germ cells of the testis (at protein level).

The protein resides in the cell projection. It localises to the cilium. It is found in the flagellum membrane. The protein localises to the endoplasmic reticulum membrane. In terms of biological role, may play a role in sperm development or sperm function. However, does not appear to have an essential role in spermatogenesis or male fertility. This is Patched domain-containing protein 3 (Ptchd3) from Mus musculus (Mouse).